We begin with the raw amino-acid sequence, 128 residues long: MAKTKHPPAPDRVAAFQTGISAETRAAAYLMAKGYRILARRFKTPCGEIDIVAQRRQLIAFVEVKARARLDDAAYAVTPRQQQRIIAAAEAWLMANPDHATFELRFDAVLVAPKRLPQHLPAAFDASP.

It belongs to the UPF0102 family.

This is UPF0102 protein RPB_0420 from Rhodopseudomonas palustris (strain HaA2).